Consider the following 263-residue polypeptide: Phosphatidylglycerol--prolipoprotein diacylglyceryl transferase (263 aa).

3 helical membrane passes run 17-37, 56-76, and 88-108; these read LSVR…IFLG, LLFY…VLFY, and IFAV…VLVA. Arginine 139 serves as a coordination point for a 1,2-diacyl-sn-glycero-3-phospho-(1'-sn-glycerol). The next 2 membrane-spanning stretches (helical) occupy residues 176 to 196 and 236 to 256; these read QLYH…WFTA and ISMG…MVVF.

Belongs to the Lgt family.

Its subcellular location is the cell inner membrane. The enzyme catalyses L-cysteinyl-[prolipoprotein] + a 1,2-diacyl-sn-glycero-3-phospho-(1'-sn-glycerol) = an S-1,2-diacyl-sn-glyceryl-L-cysteinyl-[prolipoprotein] + sn-glycerol 1-phosphate + H(+). It participates in protein modification; lipoprotein biosynthesis (diacylglyceryl transfer). Its function is as follows. Catalyzes the transfer of the diacylglyceryl group from phosphatidylglycerol to the sulfhydryl group of the N-terminal cysteine of a prolipoprotein, the first step in the formation of mature lipoproteins. This chain is Phosphatidylglycerol--prolipoprotein diacylglyceryl transferase, found in Dechloromonas aromatica (strain RCB).